Here is a 290-residue protein sequence, read N- to C-terminus: Putative tyrosine recombinase TTE1313 (290 aa).

The region spanning 1–85 is the Core-binding (CB) domain; the sequence is MAESVVGEFL…SIKAFYHYLF (85 aa). Positions 106–290 constitute a Tyr recombinase domain; the sequence is KEPVTLTVEQ…EVYNKFHPRA (185 aa). Residue Arg239 is part of the active site. Tyr283 functions as the O-(3'-phospho-DNA)-tyrosine intermediate in the catalytic mechanism.

It belongs to the 'phage' integrase family.

It is found in the cytoplasm. Site-specific tyrosine recombinase, which acts by catalyzing the cutting and rejoining of the recombining DNA molecules. This chain is Putative tyrosine recombinase TTE1313, found in Caldanaerobacter subterraneus subsp. tengcongensis (strain DSM 15242 / JCM 11007 / NBRC 100824 / MB4) (Thermoanaerobacter tengcongensis).